The sequence spans 102 residues: MVQIVSQDNFADSIASGLVLVDFFAEWCGPCKMLTPVLEALAAELPYVTILKLDIDASPRPAEQFGVSSIPTLILFKDGKEVERSVGLKDKDSLVKLISKHQ.

Positions 1–102 (MVQIVSQDNF…SLVKLISKHQ (102 aa)) constitute a Thioredoxin domain. Cys-28 and Cys-31 are oxidised to a cystine.

Belongs to the thioredoxin family.

Functionally, participates in various redox reactions through the reversible oxidation of its active center dithiol to a disulfide and catalyzes dithiol-disulfide exchange reactions. The chain is Thioredoxin (trxA) from Chlamydia muridarum (strain MoPn / Nigg).